The following is a 122-amino-acid chain: Large ribosomal subunit protein uL14c (122 aa).

It belongs to the universal ribosomal protein uL14 family. As to quaternary structure, part of the 50S ribosomal subunit.

The protein resides in the plastid. It localises to the chloroplast. Its function is as follows. Binds to 23S rRNA. The polypeptide is Large ribosomal subunit protein uL14c (Piper cenocladum (Ant piper)).